Here is a 527-residue protein sequence, read N- to C-terminus: Inosine-5'-monophosphate dehydrogenase (527 aa).

CBS domains are found at residues 121-183 and 184-240; these read FILD…VTAV and MSTD…PLAS. Residues 277–279 and 327–329 contribute to the NAD(+) site; these read DSS and GMG. G329 and G331 together coordinate K(+). Residue S332 participates in IMP binding. C334 is a K(+) binding site. C334 functions as the Thioimidate intermediate in the catalytic mechanism. Residues 367-369 and 390-391 each bind IMP; these read DGG and GS. R440 functions as the Proton acceptor in the catalytic mechanism. Q452 lines the IMP pocket. The segment at 506-527 is disordered; it reads ASAQTEGNVHGLHSHEKKLYSS. Positions 511 and 512 each coordinate K(+). The span at 518 to 527 shows a compositional bias: basic and acidic residues; it reads HSHEKKLYSS.

This sequence belongs to the IMPDH/GMPR family. As to quaternary structure, homotetramer. Requires K(+) as cofactor.

It localises to the cytoplasm. It catalyses the reaction IMP + NAD(+) + H2O = XMP + NADH + H(+). It participates in purine metabolism; XMP biosynthesis via de novo pathway; XMP from IMP: step 1/1. Its activity is regulated as follows. Mycophenolic acid (MPA) is a non-competitive inhibitor that prevents formation of the closed enzyme conformation by binding to the same site as the amobile flap. In contrast, mizoribine monophosphate (MZP) is a competitive inhibitor that induces the closed conformation. MPA is a potent inhibitor of mammalian IMPDHs but a poor inhibitor of the bacterial enzymes. MZP is a more potent inhibitor of bacterial IMPDH. Catalyzes the conversion of inosine 5'-phosphate (IMP) to xanthosine 5'-phosphate (XMP), the first committed and rate-limiting step in the de novo synthesis of guanine nucleotides, and therefore plays an important role in the regulation of cell growth. Part of the gene cluster that mediates the biosynthesis of mycophenolic acid (MPA), the first isolated antibiotic natural product in the world. Does not play a role in the biosynthesis of MPA, but is involved in self resistance to MPA, since MPA acts as an inhibitor of IMP dehydrogenases. The sequence is that of Inosine-5'-monophosphate dehydrogenase from Penicillium brevicompactum.